Reading from the N-terminus, the 247-residue chain is LHFPL tetraspan subfamily member 4 protein (247 aa).

Transmembrane regions (helical) follow at residues 22–42, 97–117, 127–147, and 178–198; these read IGVLWAIFTICFAIINVVVFI, FFVLLSMVLILGCITCFALFF, ICAWMQLLAALCLVLGCMIFP, and ILAIIGILNALILSFLAFVLG.

Belongs to the LHFP family. As to quaternary structure, interacts with GABA(A) receptor subunits. Interacts with GABRB3. Interacts with GABRA2. Interacts with GABRG2. Identified in a complex of 720 kDa composed of LHFPL4, NLGN2, GABRA1, GABRB2, GABRG2 and GABRB3. Interacts with GABRA1. Interacts with NLGN2; leading to mutual regulation of protein level and synaptic clustering.

Its subcellular location is the cell projection. It localises to the dendrite. The protein localises to the postsynaptic cell membrane. Plays a role in the regulation of inhibitory synapse formation and function by being involved in maintening gamma-aminobutyric acid receptors (GABAARs) clustering and their associated scaffold proteins at inhibitory synaptic sites. Acts in concert with NLGN2 to recruit or stabilize GABAARs. In Bos taurus (Bovine), this protein is LHFPL tetraspan subfamily member 4 protein.